The following is a 615-amino-acid chain: MAKAVGIDLGTTNSVIAVLEGGKPVVLENAEGERVTPSVVAFRDGETLVGRMAKRQAVLNPEGTIFEIKRFIGRRFEEVQEEAKRVPYKVVPGPDGGVRVEVKGKLYTPEEISAMILRKLVEDASKKLGEKITKAVITVPAYFNNAQREATANAGRIAGLEVLRIINEPTAAALAYGLDKKGNETVLVFDLGGGTFDVTILEIGEGVFEVKATSGDTHLGGSDMDHAIVNWLAEEFKKEHGVDLKADRQALQRLIEAAEKAKIELSSTLETTISLPFIALDPASKTPLHLEKKLTRAKFEELIQPLLKRLRGPVEQALKDAGLTPAQIDEVILVGGATRVPAVQQVVRELLGKEPNRSVNPDEVVAMGAAIQAGVLMGEVRDVVLLDVTPLSLGVETKGGVMTVLIPRNTTIPTRKCEIFTTAEHNQTAVEIHVLQGERPMAQDNKSLGRFRLEGIPPMPAGVPQIEVCFDIDANGILHVTAKERSTGREASITIQNTTTLSEEEIQRIIEEAKRHAEEDRRRREHAELKNALDSARVQAERVLQERQGAPEARARLEAAIGKAKELVERDAPDPELKAATEELLKAVEEYEKGAQAASGKGPDDVIDADYKPAD.

Thr-195 is subject to Phosphothreonine; by autocatalysis. The segment at 592–615 is disordered; it reads EKGAQAASGKGPDDVIDADYKPAD.

It belongs to the heat shock protein 70 family. In terms of assembly, forms a heterononamer with DnaJ and DafA in the resting state. Three copies of each protein are present in the complex.

Cooperates with DnaJ, GrpE and ClpB to reactivate heat-inactivated proteins. The protein is Chaperone protein DnaK (dnaK) of Thermus thermophilus (strain ATCC 27634 / DSM 579 / HB8).